The following is a 427-amino-acid chain: Serine/threonine-protein kinase ssn3 (427 aa).

The Protein kinase domain maps to 40–369; sequence YHIVGFISSG…AQEALEHPYF (330 aa). Residues 46–54 and Lys70 contribute to the ATP site; that span reads ISSGTYGRV. The Proton acceptor role is filled by Asp172. Residues 390–399 are compositionally biased toward basic and acidic residues; sequence RRVTQDDNDI. The segment at 390-427 is disordered; sequence RRVTQDDNDIRSGSLPGTKRSGLPDDSLLGRATKRLKE.

This sequence belongs to the protein kinase superfamily. CMGC Ser/Thr protein kinase family. CDC2/CDKX subfamily. In terms of assembly, component of the srb8-11 complex, a regulatory module of the Mediator complex. Mg(2+) is required as a cofactor.

It is found in the nucleus. It carries out the reaction L-seryl-[protein] + ATP = O-phospho-L-seryl-[protein] + ADP + H(+). The enzyme catalyses L-threonyl-[protein] + ATP = O-phospho-L-threonyl-[protein] + ADP + H(+). It catalyses the reaction [DNA-directed RNA polymerase] + ATP = phospho-[DNA-directed RNA polymerase] + ADP + H(+). Its function is as follows. Component of the srb8-11 complex. The srb8-11 complex is a regulatory module of the Mediator complex which is itself involved in regulation of basal and activated RNA polymerase II-dependent transcription. The srb8-11 complex may be involved in the transcriptional repression of a subset of genes regulated by Mediator. It may inhibit the association of the Mediator complex with RNA polymerase II to form the holoenzyme complex. The srb8-11 complex phosphorylates the C-terminal domain (CTD) of the largest subunit of RNA polymerase II. This Aspergillus niger (strain ATCC MYA-4892 / CBS 513.88 / FGSC A1513) protein is Serine/threonine-protein kinase ssn3 (ssn3).